Here is a 690-residue protein sequence, read N- to C-terminus: Elongation factor G (690 aa).

The tr-type G domain occupies 8-282 (DKVRNIGIMA…AIVNYLPSPL (275 aa)). Residues 17–24 (AHIDAGKT), 81–85 (DTPGH), and 135–138 (NKMD) contribute to the GTP site.

Belongs to the TRAFAC class translation factor GTPase superfamily. Classic translation factor GTPase family. EF-G/EF-2 subfamily.

It is found in the cytoplasm. In terms of biological role, catalyzes the GTP-dependent ribosomal translocation step during translation elongation. During this step, the ribosome changes from the pre-translocational (PRE) to the post-translocational (POST) state as the newly formed A-site-bound peptidyl-tRNA and P-site-bound deacylated tRNA move to the P and E sites, respectively. Catalyzes the coordinated movement of the two tRNA molecules, the mRNA and conformational changes in the ribosome. In Caldanaerobacter subterraneus subsp. tengcongensis (strain DSM 15242 / JCM 11007 / NBRC 100824 / MB4) (Thermoanaerobacter tengcongensis), this protein is Elongation factor G.